The chain runs to 236 residues: 7-cyano-7-deazaguanine synthase (236 aa).

7-17 lines the ATP pocket; it reads CSGGLDSVSLA. The Zn(2+) site is built by cysteine 185, cysteine 193, cysteine 196, and cysteine 199.

The protein belongs to the QueC family. Zn(2+) is required as a cofactor.

It catalyses the reaction 7-carboxy-7-deazaguanine + NH4(+) + ATP = 7-cyano-7-deazaguanine + ADP + phosphate + H2O + H(+). It functions in the pathway purine metabolism; 7-cyano-7-deazaguanine biosynthesis. Functionally, catalyzes the ATP-dependent conversion of 7-carboxy-7-deazaguanine (CDG) to 7-cyano-7-deazaguanine (preQ(0)). This chain is 7-cyano-7-deazaguanine synthase, found in Rhizobium etli (strain ATCC 51251 / DSM 11541 / JCM 21823 / NBRC 15573 / CFN 42).